The primary structure comprises 414 residues: MAMVVSTWRDPQDEVPGSQGSQASQAPPVPGPPPGAPHTPQTPGQGGPASTPAQTAAGSQGGPGGPGSDKQQQQQHIECVVCGDKSSGKHYGQFTCEGCKSFFKRSVRRNLSYTCRANRNCPIDQHHRNQCQYCRLKKCLKVGMRREAVQRGRMPPTQPTHGQFALTNGDPLNCHSYLSGYISLLLRAEPYPTSRFGSQCMQPNNIMGIENICELAARMLFSAVEWARNIPFFPDLQITDQVALLRLTWSELFVLNAAQCSMPLHVAPLLAAAGLHASPMSADRVVAFMDHIRIFQEQVEKLKALHVDSAEYSCLKAIVLFTSDACGLSDVAHVESLQEKSQCALEEYVRSQYPNQPTRFGKLLLRLPSLRTVSSSVIEQLFFVRLVGKTPIETLIRDMLLSGSSFNWPYMAIQ.

A disordered region spans residues 1–72 (MAMVVSTWRD…PGGPGSDKQQ (72 aa)). Residues 27 to 37 (PPVPGPPPGAP) are compositionally biased toward pro residues. The segment covering 38–54 (HTPQTPGQGGPASTPAQ) has biased composition (low complexity). Residue T51 is modified to Phosphothreonine. The segment at residues 76–151 (HIECVVCGDK…VGMRREAVQR (76 aa)) is a DNA-binding region (nuclear receptor). 2 consecutive NR C4-type zinc fingers follow at residues 79–99 (CVVC…CEGC) and 115–139 (CRAN…LKKC). The interaction with ZFPM2 stretch occupies residues 117-414 (ANRNCPIDQH…SFNWPYMAIQ (298 aa)). The NR LBD domain maps to 177–403 (YLSGYISLLL…TLIRDMLLSG (227 aa)). An important for dimerization region spans residues 337–414 (LQEKSQCALE…SFNWPYMAIQ (78 aa)).

The protein belongs to the nuclear hormone receptor family. NR2 subfamily. Interacts with SQSTM1. Binds DNA as a dimer; homodimer or heterodimer with NR2F6. Interacts with NCOA1, NCOA2, NCOA3 and PPARGC1A. Interacts with ZFPM2.

It localises to the nucleus. Functionally, ligand-activated transcription factor. Activated by high concentrations of 9-cis-retinoic acid and all-trans-retinoic acid, but not by dexamethasone, cortisol or progesterone (in vitro). Regulation of the apolipoprotein A-I gene transcription. Binds to DNA site A. May be required to establish ovary identity during early gonad development. The polypeptide is COUP transcription factor 2 (Nr2f2) (Rattus norvegicus (Rat)).